Here is a 660-residue protein sequence, read N- to C-terminus: MHNENSVLRDAKESLFNPTPRKQGLPEDNTMTPYNGVRSIFDNSSDSHQLTDDHTHQERAISKAKLANENIAPFLAKHIPSQYAPLGTGISKSAGPPPRPDLKCRRQADEPSMDHLQWELQSLPQSDQQGIAHVWSLFSAAPAKQRELMLRGILAQCCFPQLSLISSSVRDLIRIDFITALPPEISFKILSYLDTASLCRAAQVSRGWKCLADDDVVWHRMCEQHIHRKCTKCGWGLPLLERKRLRASKEQIEKRALGVSVIPEASVTVQSVDATSGVKRTAEDLEASDSQTVKRQRLPIEEDTNIYKTNFRPWKDVYKDRFKVGTNWKYGRCSVKVFKGHTNGVMCLQFEDNILATGSYDTTIKIWDMETGEELRTLTGHTSGIRCLQFDETKLISGSIDRTLKVWNWRTGECISTYTGHLGGIIGLHFQNSILASGSTDKTVKIWNFEDKSTFLLRGHSDWVNAVRVDSCSRTVLSASDDCTVKLWDLDSKQCIRTFQGHVGQVQQVIPLPREFEFEEGHDASHEEDSNASVSGDESPSSQVSCSPTAAFFEGDRPAPPRYILTSALDSTIRLWETYTGRCLRTFFGHLEGVWALSADTLRIVSGAEDRMVKIWDPRTGKCERTFTGHSGPVTCVGLGDSCFVTGSEDCEVRIYSFKN.

Basic and acidic residues predominate over residues 1–13; that stretch reads MHNENSVLRDAKE. Disordered regions lie at residues 1-34 and 86-108; these read MHNE…MTPY and LGTG…RRQA. In terms of domain architecture, F-box spans 175-221; that stretch reads IDFITALPPEISFKILSYLDTASLCRAAQVSRGWKCLADDDVVWHRM. WD repeat units lie at residues 340 to 379, 381 to 419, 421 to 457, 459 to 500, 542 to 586, 587 to 626, and 629 to 660; these read GHTN…RTLT, HTSG…STYT, HLGG…TFLL, GHSD…RTFQ, SQVS…CLRT, FFGH…CERT, and GHSG…SFKN. The segment at 521 to 553 is disordered; sequence GHDASHEEDSNASVSGDESPSSQVSCSPTAAFF. Over residues 531–548 the composition is skewed to polar residues; the sequence is NASVSGDESPSSQVSCSP.

This sequence belongs to the WD repeat MET30/SCONB/SCON-2 family. As to quaternary structure, component of the SCF(sconB) E3 ubiquitin ligase complex.

It functions in the pathway protein modification; protein ubiquitination. In terms of biological role, component of the SCF(sconB) E3 ubiquitin ligase complex involved in the regulation of sulfur metabolite repression, probably by mediating the inactivation or degradation of the metR transcription factor. In Talaromyces marneffei (strain ATCC 18224 / CBS 334.59 / QM 7333) (Penicillium marneffei), this protein is Probable E3 ubiquitin ligase complex SCF subunit sconB (sconB).